The primary structure comprises 384 residues: Beta-glucuronosyltransferase GlcAT14C (384 aa).

The Cytoplasmic segment spans residues 1–11 (MKRSHISSPRS). A signal-anchor for type II membrane protein transmembrane segment spans residues 12–34 (YSRPAISIFGVFLLFLLVLTLSS). Residues 35–384 (RKPSDSSSGL…HENFRAKQCK (350 aa)) lie on the Lumenal side of the membrane. 3 N-linked (GlcNAc...) asparagine glycosylation sites follow: asparagine 156, asparagine 285, and asparagine 306.

Belongs to the glycosyltransferase 14 family.

It is found in the golgi apparatus membrane. Its function is as follows. Beta-glucuronosyltransferase involved in the biosynthesis of type II arabinogalactan (AG). Modifies both the beta-1,6-linked galactan and beta-1,3-linked galactan present in type II AG. The sequence is that of Beta-glucuronosyltransferase GlcAT14C from Arabidopsis thaliana (Mouse-ear cress).